A 604-amino-acid polypeptide reads, in one-letter code: 3-hydroxy-3-methylglutaryl-coenzyme A reductase 2 (604 aa).

The next 2 helical transmembrane spans lie at 47 to 67 (LPLY…MYFL) and 91 to 111 (AIVS…IGFV). Residues 112-188 (QTFVARGNND…APLVTPAASE (77 aa)) are linker. Asn120 carries N-linked (GlcNAc...) asparagine glycosylation. The segment at 189 to 604 (EDEEIIKSVV…STKDVTKASS (416 aa)) is catalytic. Catalysis depends on Glu283, which acts as the Charge relay system. The N-linked (GlcNAc...) asparagine glycan is linked to Asn347. Lys415 serves as the catalytic Charge relay system. Residue Asn460 is glycosylated (N-linked (GlcNAc...) asparagine). Asp491 serves as the catalytic Charge relay system. The Proton donor role is filled by His589. Asn593 is a glycosylation site (N-linked (GlcNAc...) asparagine).

The protein belongs to the HMG-CoA reductase family.

It is found in the endoplasmic reticulum membrane. The catalysed reaction is (R)-mevalonate + 2 NADP(+) + CoA = (3S)-3-hydroxy-3-methylglutaryl-CoA + 2 NADPH + 2 H(+). It functions in the pathway metabolic intermediate biosynthesis; (R)-mevalonate biosynthesis; (R)-mevalonate from acetyl-CoA: step 3/3. Its function is as follows. Catalyzes the synthesis of mevalonate. The specific precursor of all isoprenoid compounds present in plants. The protein is 3-hydroxy-3-methylglutaryl-coenzyme A reductase 2 (HMGR2) of Capsicum annuum (Capsicum pepper).